Reading from the N-terminus, the 351-residue chain is Rhodopsin (351 aa).

Topologically, residues 1-36 (MNGTEGQDFYVPMSNKTGVVRSPFEYPQYYLAEPWK) are extracellular. N-linked (GlcNAc...) asparagine glycosylation is found at N2 and N15. A helical transmembrane segment spans residues 37–61 (FSALAAYMFMLILLGFPVNFLTLYV). Residues 62-73 (TIQHKKLRTPLN) are Cytoplasmic-facing. Residues 74-96 (YILLNLVVADLFMVFGGFTTTMY) form a helical membrane-spanning segment. The Extracellular segment spans residues 97–110 (TSMNGYFVFGVTGC). C110 and C187 are oxidised to a cystine. Residues 111–133 (YIEGFFATLGGEIALWSLVVLAV) traverse the membrane as a helical segment. The short motif at 134 to 136 (ERY) is the 'Ionic lock' involved in activated form stabilization element. Topologically, residues 134 to 152 (ERYVVVCKPMSNFRFGENH) are cytoplasmic. Residues 153 to 173 (AIMGVAFSWIMAMACAAPPLF) traverse the membrane as a helical segment. The Extracellular portion of the chain corresponds to 174-202 (GWSRYIPEGMQCSCGIDYYTLKPEINNES). Residues 203-224 (FVIYMFVVHFMIPLAVIFFCYG) traverse the membrane as a helical segment. Topologically, residues 225 to 252 (NLVCTVKEAAAQQQESATTQKAEKEVTR) are cytoplasmic. The helical transmembrane segment at 253–274 (MVIIMVIAFLICWVPYASVAFY) threads the bilayer. Residues 275–286 (IFTNQGSDFGPI) are Extracellular-facing. The helical transmembrane segment at 287–308 (FMTIPAFFAKSSAIYNPVIYIV) threads the bilayer. N6-(retinylidene)lysine is present on K296. Over 309–351 (MNKQFRNCMITTLCCGKNPLGDEDTSAGKTETSSVSTSQVSPA) the chain is Cytoplasmic. 2 S-palmitoyl cysteine lipidation sites follow: C322 and C323. Positions 331–351 (EDTSAGKTETSSVSTSQVSPA) are disordered. Positions 340–351 (TSSVSTSQVSPA) are enriched in low complexity. S341 bears the Phosphoserine; by RK and GRK7 mark.

The protein belongs to the G-protein coupled receptor 1 family. Opsin subfamily. Contains one covalently linked retinal chromophore. Upon light absorption, the covalently bound 11-cis-retinal is converted to all-trans-retinal. After hydrolysis of the Schiff base and release of the covalently bound all-trans-retinal, active rhodopsin is regenerated by binding of a fresh molecule of 11-cis-retinal.

The protein localises to the membrane. It localises to the cell projection. The protein resides in the cilium. It is found in the photoreceptor outer segment. Photoreceptor required for image-forming vision at low light intensity. Required for photoreceptor cell viability after birth. Light-induced isomerization of 11-cis to all-trans retinal triggers a conformational change that activates signaling via G-proteins. Subsequent receptor phosphorylation mediates displacement of the bound G-protein alpha subunit by arrestin and terminates signaling. This is Rhodopsin (RHO) from Gallus gallus (Chicken).